Here is a 344-residue protein sequence, read N- to C-terminus: Phenylalanine--tRNA ligase alpha subunit (344 aa).

A Mg(2+)-binding site is contributed by E269.

This sequence belongs to the class-II aminoacyl-tRNA synthetase family. Phe-tRNA synthetase alpha subunit type 1 subfamily. Tetramer of two alpha and two beta subunits. The cofactor is Mg(2+).

The protein localises to the cytoplasm. It catalyses the reaction tRNA(Phe) + L-phenylalanine + ATP = L-phenylalanyl-tRNA(Phe) + AMP + diphosphate + H(+). The polypeptide is Phenylalanine--tRNA ligase alpha subunit (Ralstonia pickettii (strain 12J)).